Consider the following 519-residue polypeptide: Histidine--tRNA ligase (519 aa).

It belongs to the class-II aminoacyl-tRNA synthetase family. Homodimer.

It localises to the cytoplasm. It catalyses the reaction tRNA(His) + L-histidine + ATP = L-histidyl-tRNA(His) + AMP + diphosphate + H(+). This chain is Histidine--tRNA ligase, found in Rhodopseudomonas palustris (strain BisB18).